A 430-amino-acid chain; its full sequence is Serine--tRNA ligase (430 aa).

The segment at 103–127 is disordered; sequence LPNIPDDDVPDGRDENDNQEVSRWG. Residue 237-239 coordinates L-serine; the sequence is TAE. Residue 268-270 coordinates ATP; the sequence is RSE. Position 291 (glutamate 291) interacts with L-serine. Position 355–358 (355–358) interacts with ATP; that stretch reads EISS. Residue serine 391 participates in L-serine binding.

The protein belongs to the class-II aminoacyl-tRNA synthetase family. Type-1 seryl-tRNA synthetase subfamily. As to quaternary structure, homodimer. The tRNA molecule binds across the dimer.

The protein localises to the cytoplasm. It carries out the reaction tRNA(Ser) + L-serine + ATP = L-seryl-tRNA(Ser) + AMP + diphosphate + H(+). The catalysed reaction is tRNA(Sec) + L-serine + ATP = L-seryl-tRNA(Sec) + AMP + diphosphate + H(+). Its pathway is aminoacyl-tRNA biosynthesis; selenocysteinyl-tRNA(Sec) biosynthesis; L-seryl-tRNA(Sec) from L-serine and tRNA(Sec): step 1/1. Catalyzes the attachment of serine to tRNA(Ser). Is also able to aminoacylate tRNA(Sec) with serine, to form the misacylated tRNA L-seryl-tRNA(Sec), which will be further converted into selenocysteinyl-tRNA(Sec). The protein is Serine--tRNA ligase of Sodalis glossinidius (strain morsitans).